The following is an 84-amino-acid chain: Putative membrane protein insertion efficiency factor (84 aa).

This sequence belongs to the UPF0161 family.

It is found in the cell membrane. Its function is as follows. Could be involved in insertion of integral membrane proteins into the membrane. The polypeptide is Putative membrane protein insertion efficiency factor (Staphylococcus carnosus (strain TM300)).